Reading from the N-terminus, the 86-residue chain is Large ribosomal subunit protein bL31B (86 aa).

It belongs to the bacterial ribosomal protein bL31 family. Type B subfamily. As to quaternary structure, part of the 50S ribosomal subunit.

The chain is Large ribosomal subunit protein bL31B from Salmonella paratyphi A (strain ATCC 9150 / SARB42).